Reading from the N-terminus, the 149-residue chain is HTH-type transcriptional regulator LrpB (149 aa).

Positions Ile3–Ser64 constitute an HTH asnC-type domain. Positions Trp22–Lys41 form a DNA-binding region, H-T-H motif.

Functionally, negative regulation of glyA transcription and kinB-dependent sporulation. The sequence is that of HTH-type transcriptional regulator LrpB (lrpB) from Bacillus subtilis (strain 168).